A 221-amino-acid polypeptide reads, in one-letter code: Telomere repeats-binding bouquet formation protein 2 (221 aa).

It belongs to the TERB2 family. As to quaternary structure, component of the MAJIN-TERB1-TERB2 complex, composed of MAJIN, TERB1 and TERB2.

Its subcellular location is the chromosome. The protein resides in the telomere. It is found in the nucleus inner membrane. In terms of biological role, meiosis-specific telomere-associated protein involved in meiotic telomere attachment to the nucleus inner membrane, a crucial step for homologous pairing and synapsis. Component of the MAJIN-TERB1-TERB2 complex, which promotes telomere cap exchange by mediating attachment of telomeric DNA to the inner nuclear membrane and replacement of the protective cap of telomeric chromosomes: in early meiosis, the MAJIN-TERB1-TERB2 complex associates with telomeric DNA and the shelterin/telosome complex. During prophase, the complex matures and promotes release of the shelterin/telosome complex from telomeric DNA. This chain is Telomere repeats-binding bouquet formation protein 2, found in Bos taurus (Bovine).